Here is a 93-residue protein sequence, read N- to C-terminus: Co-chaperonin GroES (93 aa).

Belongs to the GroES chaperonin family. In terms of assembly, heptamer of 7 subunits arranged in a ring. Interacts with the chaperonin GroEL.

It localises to the cytoplasm. In terms of biological role, together with the chaperonin GroEL, plays an essential role in assisting protein folding. The GroEL-GroES system forms a nano-cage that allows encapsulation of the non-native substrate proteins and provides a physical environment optimized to promote and accelerate protein folding. GroES binds to the apical surface of the GroEL ring, thereby capping the opening of the GroEL channel. The sequence is that of Co-chaperonin GroES from Streptococcus gordonii.